A 163-amino-acid polypeptide reads, in one-letter code: uncharacterized protein (163 aa).

This is an uncharacterized protein from Orgyia pseudotsugata (Douglas-fir tussock moth).